The chain runs to 857 residues: Leucine--tRNA ligase (857 aa).

Positions 42–52 match the 'HIGH' region motif; it reads PYPSGRLHMGH. Positions 617–621 match the 'KMSKS' region motif; the sequence is KMSKS. Lys-620 is an ATP binding site.

The protein belongs to the class-I aminoacyl-tRNA synthetase family.

It is found in the cytoplasm. The catalysed reaction is tRNA(Leu) + L-leucine + ATP = L-leucyl-tRNA(Leu) + AMP + diphosphate. The chain is Leucine--tRNA ligase from Vibrio vulnificus (strain CMCP6).